A 501-amino-acid polypeptide reads, in one-letter code: Ammonium transporter 1 member 1 (501 aa).

A run of 10 helical transmembrane segments spans residues 8–28 (LAVLLGPNATAAANYICGQLG), 46–66 (LLFSAYLVFSMQLGFAMLCAG), 81–101 (VLDAAAGGLFYYLFGYAFAFG), 128–148 (FLYQWAFAIAAAGITSGSIAE), 152–172 (FVAYLIYSSFLTGFVYPVVSH), 199–219 (FAGSGVVHMVGGIAGLWGALI), 243–263 (LVVLGTFLLWFGWYGFNPGSF), 333–353 (VVEPWAAIICGFVAALVLLGC), 366–386 (LEAAQLHGGCGAWGLIFTALF), and 419–439 (LIQIIVITGWVSATMGTLFFI). Position 460 is a phosphothreonine (T460). A phosphoserine mark is found at S475, S488, S490, and S492.

This sequence belongs to the ammonia transporter channel (TC 1.A.11.2) family. As to quaternary structure, self interacts. Interacts with the receptor protein kinases CEPR2, At2g28990 and PAM74. As to expression, highly expressed in roots. Expressed in root tips, root hairs, root epidermis, rhizodermis, cortex and pericycle. Expressed in leaves epidermal and mesophyll cells.

The protein localises to the cell membrane. In terms of biological role, high affinity ammonium transporter probably involved in ammonium uptake from the soil, long-distance transport to the shoots and re-uptake of apoplastic ammonium that derives from photorespiration in shoots. Contributes with AMT1-3 to the overall ammonium uptake capacity in roots under nitrogen-deficiency conditions. The sequence is that of Ammonium transporter 1 member 1 (AMT1-1) from Arabidopsis thaliana (Mouse-ear cress).